The primary structure comprises 658 residues: UvrABC system protein B (658 aa).

The region spanning 26–413 is the Helicase ATP-binding domain; it reads EGINSGKKKQ…SPEVIEQIIR (388 aa). 39-46 contributes to the ATP binding site; it reads GATGTGKT. The Beta-hairpin signature appears at 92–115; the sequence is YYDYYQPEAYVPQTDTFIEKDAQI. In terms of domain architecture, Helicase C-terminal spans 430-596; it reads QIDDLLGEIQ…TIQKGVRDVI (167 aa). In terms of domain architecture, UVR spans 622–657; that stretch reads EKTIAKMEAEMKEAAKALDFERAAELRDLLLELKAE.

It belongs to the UvrB family. Forms a heterotetramer with UvrA during the search for lesions. Interacts with UvrC in an incision complex.

The protein resides in the cytoplasm. Functionally, the UvrABC repair system catalyzes the recognition and processing of DNA lesions. A damage recognition complex composed of 2 UvrA and 2 UvrB subunits scans DNA for abnormalities. Upon binding of the UvrA(2)B(2) complex to a putative damaged site, the DNA wraps around one UvrB monomer. DNA wrap is dependent on ATP binding by UvrB and probably causes local melting of the DNA helix, facilitating insertion of UvrB beta-hairpin between the DNA strands. Then UvrB probes one DNA strand for the presence of a lesion. If a lesion is found the UvrA subunits dissociate and the UvrB-DNA preincision complex is formed. This complex is subsequently bound by UvrC and the second UvrB is released. If no lesion is found, the DNA wraps around the other UvrB subunit that will check the other stand for damage. In Bacillus cereus (strain ZK / E33L), this protein is UvrABC system protein B.